A 1031-amino-acid polypeptide reads, in one-letter code: Zinc finger protein 445 (1031 aa).

The interval 1 to 43 (MPPGRWHAAYPAQAQSSRERGRLQTVKKEEEDESYTPVQAARP) is disordered. The segment covering 17 to 29 (SRERGRLQTVKKE) has biased composition (basic and acidic residues). A Glycyl lysine isopeptide (Lys-Gly) (interchain with G-Cter in SUMO1) cross-link involves residue lysine 28. One can recognise an SCAN box domain in the interval 55–137 (RQLFRQLRYH…ALLEELQRDL (83 aa)). The 71-residue stretch at 234–304 (MTFKDVEVTF…NMQAAQPKGN (71 aa)) folds into the KRAB domain. Residues lysine 317, lysine 374, lysine 375, and lysine 399 each participate in a glycyl lysine isopeptide (Lys-Gly) (interchain with G-Cter in SUMO2) cross-link. 3 C2H2-type zinc fingers span residues 485-507 (FKCSDCGRTFSHSSHLAYHQRLH), 513-535 (FKCRVCGKAFRWSSNCARHEKIH), and 541-563 (YKCDLCEKAFRRLSAYRLHRETH). Residue lysine 567 forms a Glycyl lysine isopeptide (Lys-Gly) (interchain with G-Cter in SUMO2) linkage. 2 consecutive C2H2-type zinc fingers follow at residues 597–619 (FDCSQCRKSFHCKSYVLEHQRIH) and 625–647 (YKCTKCRKTFRWRSNFTRHMRLH). A Glycyl lysine isopeptide (Lys-Gly) (interchain with G-Cter in SUMO2) cross-link involves residue lysine 654. 2 C2H2-type zinc fingers span residues 681 to 703 (FLCQQCGKTFTRKKTLVDHQRIH) and 709 to 731 (YQCSDCGKDFAYRSAFIVHKKKH). Glycyl lysine isopeptide (Lys-Gly) (interchain with G-Cter in SUMO2) cross-links involve residues lysine 736 and lysine 758. 5 C2H2-type zinc fingers span residues 762–784 (YKCSQCGKAFRNHSFLLIHQRVH), 790–812 (YKCRECGKAFRWSSNLYRHQRIH), 840–862 (FWCQECGKTFTRKRTLLDHKGIH), 868–890 (YKCNLCGKSYDRNYRLVNHQRIH), and 896–918 (FKCQWCGKEFIGRHTLSSHQRKH). A disordered region spans residues 911–939 (LSSHQRKHTRAAQAERSPPARSSSQDTKL). Residues lysine 938, lysine 956, and lysine 975 each participate in a glycyl lysine isopeptide (Lys-Gly) (interchain with G-Cter in SUMO2) cross-link. 2 C2H2-type zinc fingers span residues 978 to 1000 (HKCSICGKTFNKSSQLISHKRFH) and 1006 to 1028 (FKCSKCGKTFRWSSNLARHMKNH).

This sequence belongs to the krueppel C2H2-type zinc-finger protein family.

Its subcellular location is the nucleus. In terms of biological role, transcription regulator required to maintain maternal and paternal gene imprinting, a process by which gene expression is restricted in a parent of origin-specific manner by epigenetic modification of genomic DNA and chromatin, including DNA methylation. Acts by controlling DNA methylation during the earliest multicellular stages of development at multiple imprinting control regions (ICRs). Acts together with ZFP57, but seems to be the major factor in human early embryonic imprinting maintenance. In contrast, in mice, ZFP57 plays the predominant role in imprinting maintenance. This chain is Zinc finger protein 445, found in Homo sapiens (Human).